Here is a 558-residue protein sequence, read N- to C-terminus: Glucose-6-phosphate isomerase (558 aa).

Glutamate 363 serves as the catalytic Proton donor. Catalysis depends on residues histidine 394 and lysine 522.

It belongs to the GPI family.

The protein resides in the cytoplasm. The enzyme catalyses alpha-D-glucose 6-phosphate = beta-D-fructose 6-phosphate. The protein operates within carbohydrate biosynthesis; gluconeogenesis. It functions in the pathway carbohydrate degradation; glycolysis; D-glyceraldehyde 3-phosphate and glycerone phosphate from D-glucose: step 2/4. Catalyzes the reversible isomerization of glucose-6-phosphate to fructose-6-phosphate. The sequence is that of Glucose-6-phosphate isomerase from Blochmanniella floridana.